The primary structure comprises 413 residues: Phosphoglycerate kinase (413 aa).

Residues 24 to 26 (DFN), R39, 62 to 65 (HLSR), R123, and R165 each bind substrate. Residues K216, E343, and 369-372 (GGDS) contribute to the ATP site.

This sequence belongs to the phosphoglycerate kinase family. Monomer.

Its subcellular location is the cytoplasm. The catalysed reaction is (2R)-3-phosphoglycerate + ATP = (2R)-3-phospho-glyceroyl phosphate + ADP. It functions in the pathway carbohydrate degradation; glycolysis; pyruvate from D-glyceraldehyde 3-phosphate: step 2/5. This is Phosphoglycerate kinase from Mycoplasmoides gallisepticum (strain R(low / passage 15 / clone 2)) (Mycoplasma gallisepticum).